A 265-amino-acid chain; its full sequence is MSRIQKTFAALAAQNKKGLIPFITAGDPEPGLTVDLMHALVAGGADVIELGVPFSDPMADGPVIQRASERALANGVSLTQVLQWVREFRQTNADTPVVLMGYANPIERMGEAAFAKAAGAAGVDGVLVVDYPPEECESFAVLMRDNGIDPIFLLAPTSTDARIEAVGKVASGYVYYVSLKGVTGSATLDLDSVAARLPLIKKHVNLPVGVGFGIRDAQTARAIGSVADAVVIGSRLVQLLEDAPRGQAVESLRAFIAGIREALDA.

Catalysis depends on proton acceptor residues Glu49 and Asp60.

This sequence belongs to the TrpA family. As to quaternary structure, tetramer of two alpha and two beta chains.

It carries out the reaction (1S,2R)-1-C-(indol-3-yl)glycerol 3-phosphate + L-serine = D-glyceraldehyde 3-phosphate + L-tryptophan + H2O. The protein operates within amino-acid biosynthesis; L-tryptophan biosynthesis; L-tryptophan from chorismate: step 5/5. The alpha subunit is responsible for the aldol cleavage of indoleglycerol phosphate to indole and glyceraldehyde 3-phosphate. This chain is Tryptophan synthase alpha chain, found in Cupriavidus pinatubonensis (strain JMP 134 / LMG 1197) (Cupriavidus necator (strain JMP 134)).